A 54-amino-acid chain; its full sequence is Ovomucoid (54 aa).

Residues 4 to 54 (VDCSDYPKPACTVEYMPLCGSDNKTYDNKCNFCNAVVDSNGTLTLSHFGKC) form the Kazal-like domain. Cystine bridges form between Cys6-Cys36, Cys14-Cys33, and Cys22-Cys54. Asn43 carries N-linked (GlcNAc...) asparagine glycosylation.

The protein localises to the secreted. This chain is Ovomucoid, found in Anser anser anser (Western greylag goose).